The primary structure comprises 1305 residues: MSLLQSALDFLAGPGSLGGAAGRDQSDFVGQTVELGELRLRVRRVLAEGGFAFVYEAQDLGSGREYALKRLLSNEEEKNRAIIQEVCFLKKLSGHPNIVQFCSAASIGKEESDTGQAEFLLLTELCKGQLVEFLRRVECKGPLSCDSILKIFYQTCRAVQHMHRQKPPIIHRDLKVENLLLSNQGTIKLCDFGSATTISHYPDYSWSAQKRAMVEEEITRNTTPMYRTPEIVDLYSNFPIGEKQDIWALGCILYLLCFRQHPFEDGAKLRIVNGKYSIPVNDTRYTVFHDLIRGMLKVNPEERLSIAEVVRQLQEIAAARNVNPKAPITELLEQNGGYGNSGPSRAQPPSGGPVNSSGVLALAEYDQPYGGFLDILRGGTERLFTNLKDTSSKVIQSVANYAKGDLDISYITSRIAVMSFPAEGVESAIKNNIEDVRLFLDAKHPGHYAVYNLSPRIYRASKFHNRVTECGWAVRRAPHLHSLYTLCRSMHAWLREDHRNVCVVHCMDGRAASAVAVCAFLCFCRLFSTAEAAVYMFSMKRCPPGIWPSHKRYIEYVCDMVAEEPITPHSKPMLVKSVVMTPVPLFSKQRNGCRPFCEVYVGEERVTTTSQEYDRMKEFKIEDGKAVIPLGITVQGDVLTIIYHARSTLGGRLQAKMASMKMFQIQFHTGFVPRNATTVKFAKYDLDACDIQEKYPDLFQVNLEVEVEPRDRPSRDVPPWENTSLRGLNPKILFSNREEQQDILSKFGKPELPRQPGSTAQYDAEAGSPEAEITESDSPQSSSTDTNHFLHTLDWQEEKDPETGVDNTSPKESQSNLIADGDGSEVSDEEEASCPSEERKPGAGEDTPRLAAGTRQQDLIFDVGMLAAPQEPVQPEEGVDLLGLHSEGDLRPAAPLQASGVQSSNTDLLSSLLEPSDASQVGPPGDLLGGETPLLLASPVSLLGVQSNLQGKVPDTVDPFDQFLLPSSSDTQPCSKPDLFGEFLNSDSVASSTAFPSTHSAPPPSCSTAFLHLGDLPAEPNKVIASSSHPDLLGGWDTWAETALPGPASMPVPEGTLFSSAGHPAPPGPNPSQTKSQNPDPFADLSDLSSSLQGLPAGLPAGSFVGTSATTHKSNSSWQTTRPTAPGTSWPPQAKPAPRASEQLRSHFSVIGAREERGVRAPSFAQKPKVSENDFEDLLPNQGFSKSDKKGPKTMAEMRKQELARDTDPFKLKLLDWIEGKERNIRALLSTLHTVLWDGESRWTPVSMADLVTPEQVKKQYRRAVLVVHPDKATGQPYEQSAKMIFMELNDAWSEFENQGSRPLF.

N-acetylserine is present on Ser2. 2 positions are modified to phosphoserine: Ser2 and Ser16. One can recognise a Protein kinase domain in the interval Leu40 to Glu315. Asp173 serves as the catalytic Proton acceptor. The tract at residues Leu332–Val354 is disordered. The 168-residue stretch at Ser397–Glu564 folds into the Phosphatase tensin-type domain. Phosphoserine is present on Ser454. The 139-residue stretch at Ser570–Glu708 folds into the C2 tensin-type domain. Residues Phe747–Gln856 are disordered. The residue at position 768 (Ser768) is a Phosphoserine. Residue Thr774 is modified to Phosphothreonine. Positions Ser776–Phe789 are enriched in polar residues. Ser781 is subject to Phosphoserine. Thr792 carries the post-translational modification Phosphothreonine. Over residues Val805 to Leu817 the composition is skewed to polar residues. Phosphoserine is present on residues Ser809, Ser824, and Ser827. Residues Asp822–Ala832 are compositionally biased toward acidic residues. Residues Ser836–Pro848 show a composition bias toward basic and acidic residues. Ser938 carries the post-translational modification Phosphoserine. Residues Leu1044–Ser1141 form a disordered region. Polar residues predominate over residues Val1105–Pro1131. Residue Arg1122 is modified to Omega-N-methylarginine. Residue Ser1171 is modified to Phosphoserine. Positions Ser1241–Phe1305 constitute a J domain.

Belongs to the protein kinase superfamily. Ser/Thr protein kinase family.

It is found in the cytoplasm. Its subcellular location is the perinuclear region. The protein resides in the golgi apparatus. The protein localises to the trans-Golgi network. It localises to the cell junction. It is found in the focal adhesion. Its subcellular location is the cytoplasmic vesicle. The protein resides in the clathrin-coated vesicle. It catalyses the reaction L-seryl-[protein] + ATP = O-phospho-L-seryl-[protein] + ADP + H(+). The enzyme catalyses L-threonyl-[protein] + ATP = O-phospho-L-threonyl-[protein] + ADP + H(+). Associates with cyclin G and CDK5. Seems to act as an auxilin homolog that is involved in the uncoating of clathrin-coated vesicles by Hsc70 in non-neuronal cells. Expression oscillates slightly during the cell cycle, peaking at G1. May play a role in clathrin-mediated endocytosis and intracellular trafficking, and in the dynamics of clathrin assembly/disassembly. This chain is Cyclin-G-associated kinase, found in Rattus norvegicus (Rat).